Reading from the N-terminus, the 575-residue chain is 2-isopropylmalate synthase (575 aa).

Positions 31-305 (PTWLSTDLRD…APGLDFSDIA (275 aa)) constitute a Pyruvate carboxyltransferase domain. Mg(2+) contacts are provided by D40, H244, H246, and N280. The regulatory domain stretch occupies residues 437 to 575 (PVQASPDFSD…RFAGEEQGKG (139 aa)).

The protein belongs to the alpha-IPM synthase/homocitrate synthase family. LeuA type 2 subfamily. Homodimer. It depends on Mg(2+) as a cofactor.

The protein resides in the cytoplasm. The enzyme catalyses 3-methyl-2-oxobutanoate + acetyl-CoA + H2O = (2S)-2-isopropylmalate + CoA + H(+). The protein operates within amino-acid biosynthesis; L-leucine biosynthesis; L-leucine from 3-methyl-2-oxobutanoate: step 1/4. Functionally, catalyzes the condensation of the acetyl group of acetyl-CoA with 3-methyl-2-oxobutanoate (2-ketoisovalerate) to form 3-carboxy-3-hydroxy-4-methylpentanoate (2-isopropylmalate). The protein is 2-isopropylmalate synthase of Herbaspirillum seropedicae (strain SmR1).